Here is a 142-residue protein sequence, read N- to C-terminus: ATP synthase epsilon chain (142 aa).

Belongs to the ATPase epsilon chain family. In terms of assembly, F-type ATPases have 2 components, CF(1) - the catalytic core - and CF(0) - the membrane proton channel. CF(1) has five subunits: alpha(3), beta(3), gamma(1), delta(1), epsilon(1). CF(0) has three main subunits: a, b and c.

The protein resides in the cell inner membrane. Its function is as follows. Produces ATP from ADP in the presence of a proton gradient across the membrane. This is ATP synthase epsilon chain from Shewanella sediminis (strain HAW-EB3).